Consider the following 245-residue polypeptide: tRNA (guanine-N(1)-)-methyltransferase (245 aa).

Residues Gly-111 and Ile-130–Leu-135 contribute to the S-adenosyl-L-methionine site.

Belongs to the RNA methyltransferase TrmD family. In terms of assembly, homodimer.

It localises to the cytoplasm. It carries out the reaction guanosine(37) in tRNA + S-adenosyl-L-methionine = N(1)-methylguanosine(37) in tRNA + S-adenosyl-L-homocysteine + H(+). Functionally, specifically methylates guanosine-37 in various tRNAs. This is tRNA (guanine-N(1)-)-methyltransferase from Dictyoglomus turgidum (strain DSM 6724 / Z-1310).